We begin with the raw amino-acid sequence, 225 residues long: MPVTVRWLGETPYDACFDAMRAFTDARTPDTDDEIWVVEHPPVYTLGQAGNPAHLLVADSGVPLVKVDRGGQITYHGPGQIVAYLLVDLRRRKLMVRTLVTRIEEAVIETLAAYNLASARKAGAPGIYVESGPHRGAKIAALGLKIRNGCSYHGLSVNVKMDLRPFLAINPCGYAGLETIDMASLGATADWHEVAQTLVRRLIAHLDGATAAAALPQQALEQSND.

Residues 29–210 (PDTDDEIWVV…RLIAHLDGAT (182 aa)) enclose the BPL/LPL catalytic domain. Substrate-binding positions include 69-76 (RGGQITYH), 141-143 (ALG), and 154-156 (GLS). The Acyl-thioester intermediate role is filled by C172.

It belongs to the LipB family.

It localises to the cytoplasm. The catalysed reaction is octanoyl-[ACP] + L-lysyl-[protein] = N(6)-octanoyl-L-lysyl-[protein] + holo-[ACP] + H(+). Its pathway is protein modification; protein lipoylation via endogenous pathway; protein N(6)-(lipoyl)lysine from octanoyl-[acyl-carrier-protein]: step 1/2. Functionally, catalyzes the transfer of endogenously produced octanoic acid from octanoyl-acyl-carrier-protein onto the lipoyl domains of lipoate-dependent enzymes. Lipoyl-ACP can also act as a substrate although octanoyl-ACP is likely to be the physiological substrate. This Burkholderia pseudomallei (strain K96243) protein is Octanoyltransferase.